Consider the following 148-residue polypeptide: Calcium-regulated heat stable protein 1 (148 aa).

Residues 1–12 show a composition bias toward pro residues; that stretch reads MSSEPPPPPLQP. Positions 1–47 are disordered; the sequence is MSSEPPPPPLQPPTHQTSVGLLDTPRTRDRSPSPLRGNVVPSPLPTR. Serine 2 carries the N-acetylserine modification. A phosphoserine mark is found at serine 31, serine 33, and serine 42. Phosphothreonine is present on threonine 46. Serine 53 and serine 59 each carry phosphoserine. The CSD domain maps to 63 to 130; that stretch reads VYKGVCKCFC…KLQAVEVVIT (68 aa). Serine 147 carries the phosphoserine modification.

As to quaternary structure, homodimer. Interacts with STYX. In terms of processing, can be phosphorylated by DYRK2 (in vitro). Dephosphorylated by calcineurin in a Ca(2+) dependent manner.

The protein resides in the cytoplasm. It localises to the P-body. The protein localises to the cytoplasmic granule. In terms of biological role, binds mRNA and regulates the stability of target mRNA. This Mus musculus (Mouse) protein is Calcium-regulated heat stable protein 1 (Carhsp1).